The sequence spans 302 residues: UDP-N-acetylenolpyruvoylglucosamine reductase (302 aa).

Positions 31 to 196 (KIGGPADVLA…LRAWISLERG (166 aa)) constitute an FAD-binding PCMH-type domain. Arg175 is an active-site residue. The Proton donor role is filled by Ser225. Glu295 is a catalytic residue.

This sequence belongs to the MurB family. FAD is required as a cofactor.

Its subcellular location is the cytoplasm. It carries out the reaction UDP-N-acetyl-alpha-D-muramate + NADP(+) = UDP-N-acetyl-3-O-(1-carboxyvinyl)-alpha-D-glucosamine + NADPH + H(+). Its pathway is cell wall biogenesis; peptidoglycan biosynthesis. Its function is as follows. Cell wall formation. This is UDP-N-acetylenolpyruvoylglucosamine reductase from Caldanaerobacter subterraneus subsp. tengcongensis (strain DSM 15242 / JCM 11007 / NBRC 100824 / MB4) (Thermoanaerobacter tengcongensis).